A 376-amino-acid polypeptide reads, in one-letter code: Queuine tRNA-ribosyltransferase (376 aa).

Residue Asp-89 is the Proton acceptor of the active site. Substrate contacts are provided by residues 89–93 (DSGGF), Asp-143, Gln-194, and Gly-221. Residues 252–258 (GVGLPSN) are RNA binding. Residue Asp-271 is the Nucleophile of the active site. The RNA binding; important for wobble base 34 recognition stretch occupies residues 276 to 280 (ARNGR). The Zn(2+) site is built by Cys-309, Cys-311, Cys-314, and His-340.

Belongs to the queuine tRNA-ribosyltransferase family. As to quaternary structure, homodimer. Within each dimer, one monomer is responsible for RNA recognition and catalysis, while the other monomer binds to the replacement base PreQ1. Requires Zn(2+) as cofactor.

The catalysed reaction is 7-aminomethyl-7-carbaguanine + guanosine(34) in tRNA = 7-aminomethyl-7-carbaguanosine(34) in tRNA + guanine. The protein operates within tRNA modification; tRNA-queuosine biosynthesis. Its function is as follows. Catalyzes the base-exchange of a guanine (G) residue with the queuine precursor 7-aminomethyl-7-deazaguanine (PreQ1) at position 34 (anticodon wobble position) in tRNAs with GU(N) anticodons (tRNA-Asp, -Asn, -His and -Tyr). Catalysis occurs through a double-displacement mechanism. The nucleophile active site attacks the C1' of nucleotide 34 to detach the guanine base from the RNA, forming a covalent enzyme-RNA intermediate. The proton acceptor active site deprotonates the incoming PreQ1, allowing a nucleophilic attack on the C1' of the ribose to form the product. After dissociation, two additional enzymatic reactions on the tRNA convert PreQ1 to queuine (Q), resulting in the hypermodified nucleoside queuosine (7-(((4,5-cis-dihydroxy-2-cyclopenten-1-yl)amino)methyl)-7-deazaguanosine). The protein is Queuine tRNA-ribosyltransferase of Clostridium tetani (strain Massachusetts / E88).